The chain runs to 159 residues: 2-C-methyl-D-erythritol 2,4-cyclodiphosphate synthase (159 aa).

2 residues coordinate a divalent metal cation: aspartate 8 and histidine 10. 4-CDP-2-C-methyl-D-erythritol 2-phosphate-binding positions include 8–10 (DVH) and 34–35 (HS). Histidine 42 contacts a divalent metal cation. 4-CDP-2-C-methyl-D-erythritol 2-phosphate-binding positions include 56–58 (DIG), 61–65 (FPDTD), 100–106 (AQAPRML), 132–135 (TTTE), phenylalanine 139, and arginine 142.

This sequence belongs to the IspF family. In terms of assembly, homotrimer. Requires a divalent metal cation as cofactor.

The enzyme catalyses 4-CDP-2-C-methyl-D-erythritol 2-phosphate = 2-C-methyl-D-erythritol 2,4-cyclic diphosphate + CMP. It functions in the pathway isoprenoid biosynthesis; isopentenyl diphosphate biosynthesis via DXP pathway; isopentenyl diphosphate from 1-deoxy-D-xylulose 5-phosphate: step 4/6. Functionally, involved in the biosynthesis of isopentenyl diphosphate (IPP) and dimethylallyl diphosphate (DMAPP), two major building blocks of isoprenoid compounds. Catalyzes the conversion of 4-diphosphocytidyl-2-C-methyl-D-erythritol 2-phosphate (CDP-ME2P) to 2-C-methyl-D-erythritol 2,4-cyclodiphosphate (ME-CPP) with a corresponding release of cytidine 5-monophosphate (CMP). In Escherichia coli O45:K1 (strain S88 / ExPEC), this protein is 2-C-methyl-D-erythritol 2,4-cyclodiphosphate synthase.